Consider the following 457-residue polypeptide: Probable xyloglucan 6-xylosyltransferase 3 (457 aa).

Residues 1–40 (MGKEDGFRTQKRVSTASSAAAGVLPTTMASGGVRRPPPRG) form a disordered region. At 1–51 (MGKEDGFRTQKRVSTASSAAAGVLPTTMASGGVRRPPPRGRQIQKTFNNVK) the chain is on the cytoplasmic side. The chain crosses the membrane as a helical; Signal-anchor for type II membrane protein span at residues 52–71 (MTILCGFVTILVLRGTIGIN). The Lumenal segment spans residues 72–457 (FGTSDADVVN…TTPLKIEARS (386 aa)). Residues Asn115 and Asn431 are each glycosylated (N-linked (GlcNAc...) asparagine).

This sequence belongs to the glycosyltransferase 34 family.

It is found in the golgi apparatus membrane. The catalysed reaction is Transfers an alpha-D-xylosyl residue from UDP-D-xylose to a glucose residue in xyloglucan, forming an alpha-(1-&gt;6)-D-xylosyl-D-glucose linkage.. Functionally, probable xyloglucan xylosyltransferase involved in the biosynthesis of xyloglucan. The protein is Probable xyloglucan 6-xylosyltransferase 3 of Arabidopsis thaliana (Mouse-ear cress).